The sequence spans 218 residues: Large ribosomal subunit protein uL3 (218 aa).

Positions 132-152 (FKGQGASHGTQAVHRRPGSIG) are disordered.

The protein belongs to the universal ribosomal protein uL3 family. In terms of assembly, part of the 50S ribosomal subunit. Forms a cluster with proteins L14 and L19.

Functionally, one of the primary rRNA binding proteins, it binds directly near the 3'-end of the 23S rRNA, where it nucleates assembly of the 50S subunit. The protein is Large ribosomal subunit protein uL3 of Rhodococcus erythropolis (strain PR4 / NBRC 100887).